The primary structure comprises 364 residues: O-methyltransferase ZRP4 (364 aa).

S-adenosyl-L-methionine-binding residues include G208, D231, D251, M252, and K265. Catalysis depends on H269, which acts as the Proton acceptor.

Belongs to the class I-like SAM-binding methyltransferase superfamily. Cation-independent O-methyltransferase family. COMT subfamily. Homodimer. As to expression, accumulates preferentially in the roots and is located predominantly in the region of the endodermis, low levels are seen in the leaves, stems and other shoot organs.

Functionally, may be involved in the O-methylation of suberin phenylpropanoid precursors. The chain is O-methyltransferase ZRP4 (ZRP4) from Zea mays (Maize).